Consider the following 358-residue polypeptide: Uroporphyrinogen decarboxylase (358 aa).

Substrate contacts are provided by residues 36–40 (RQAGR), Asp-85, Tyr-160, Ser-215, and His-338.

This sequence belongs to the uroporphyrinogen decarboxylase family. As to quaternary structure, homodimer.

Its subcellular location is the cytoplasm. It catalyses the reaction uroporphyrinogen III + 4 H(+) = coproporphyrinogen III + 4 CO2. The protein operates within porphyrin-containing compound metabolism; protoporphyrin-IX biosynthesis; coproporphyrinogen-III from 5-aminolevulinate: step 4/4. In terms of biological role, catalyzes the decarboxylation of four acetate groups of uroporphyrinogen-III to yield coproporphyrinogen-III. The protein is Uroporphyrinogen decarboxylase of Corynebacterium glutamicum (strain ATCC 13032 / DSM 20300 / JCM 1318 / BCRC 11384 / CCUG 27702 / LMG 3730 / NBRC 12168 / NCIMB 10025 / NRRL B-2784 / 534).